Reading from the N-terminus, the 1282-residue chain is Crescerin-like protein che-12 (1282 aa).

TOG stretches follow at residues 33 to 240 (DFDT…EHTE) and 268 to 515 (PSLV…MDSF). 8 HEAT repeats span residues 59 to 96 (QKKGELFKCIDKIICDDRWELQHQCIKFLVEAMPTFGS), 100 to 137 (YCMCFVMPNLIPKLVSNKVTVRKITHQAIATFLRLKPE), 162 to 209 (ELHH…FIGN), 261 to 300 (RLRFGIVPSLVCALIAEDTDANQRISGLEKMKQVVDQITP), 308 to 345 (PHLHSYLLMLSNVLEDLNFKVVVLALDIVRATGHHLKG), 349 to 386 (AHIQQFVNLVAKHFGNQKSVIKQIIMMTFMELFQNINP), 388 to 421 (TVGGCLRVFLENKNSRVREEVINIYTASLMTISP), and 424 to 461 (FNLQPLVNILVPMFHDVKKRVRLAAFEQLSVLAYLLNG). The disordered stretch occupies residues 566 to 714 (IQQQGQAEKP…RSFDDRPAKA (149 aa)). 2 stretches are compositionally biased toward low complexity: residues 575–592 (PSFSLPQQPAQQASHQAQ) and 633–644 (SAASNPNSSTSS). Basic and acidic residues predominate over residues 702–712 (DPPRSFDDRPA). TOG regions lie at residues 800 to 1022 (NMSV…ANVE) and 1066 to 1282 (TELL…ALIR). HEAT repeat units lie at residues 838–875 (DNLKEVIIAILNECKNLRSSVSRVAIVTIGTVAQNLNS), 879–917 (SEMEKICAVLLSKSGDVSNAFIRDDATDSLNKLVKAATA), 919–953 (KALQGIILAGAKSKNNTIRSSCANFVYDIITIQGS), 961–998 (NALSNVLPVLLQFSRDQSPQVRNPGKQSLCFLSKDPNF), 1095–1132 (ASDTRLIEAFISRLGDTNGKVASCAMETYISTMGSMAK), 1177–1214 (IEPVSLLPAMTSATKKSNVKQRPFILTQYCELSKLAYK), and 1219–1258 (QVEVMALPLLWDSVKNSAPDVDNKKATQYLAKTLAKLIGE).

Belongs to the Crescerin family. As to expression, detected in a subset of amphid neurons that lack wing- or finger-like ciliary extensions. Likewise, detected in phasmid neurons.

It localises to the cell projection. The protein localises to the cilium. The protein resides in the perikaryon. Its subcellular location is the dendrite. Required for normal structure and function of sensory cilia on amphid neurons, especially for the formation of distal ciliary structures, but is less important for normal assembly of middle and basal ciliary structures. Plays a role in the organization of axoneme microtubule bundles in sensory cilia. Required for normal structure and function of the ASER neuron that mediates attraction to NaCl. Required for normal chemotaxis to NaCl. Required for normal avoidance response to high osmolarity. In contrast, is not required for normal chemotaxis to isoamyl alcohol. Does not play a role in intraflagella transport (IFT). Promotes dauer formation in response to pheromones such as the ascarosides ascr#2, ascr#3, ascr#5, ascr#8 and icas#9. In Caenorhabditis elegans, this protein is Crescerin-like protein che-12.